Here is a 421-residue protein sequence, read N- to C-terminus: UDP-N-acetylglucosamine 1-carboxyvinyltransferase (421 aa).

22–23 serves as a coordination point for phosphoenolpyruvate; that stretch reads KN. Arg93 provides a ligand contact to UDP-N-acetyl-alpha-D-glucosamine. Cys117 (proton donor) is an active-site residue. 2-(S-cysteinyl)pyruvic acid O-phosphothioketal is present on Cys117. UDP-N-acetyl-alpha-D-glucosamine-binding positions include 122-126, Asp308, and Ile330; that span reads RPVDL.

The protein belongs to the EPSP synthase family. MurA subfamily.

It localises to the cytoplasm. It catalyses the reaction phosphoenolpyruvate + UDP-N-acetyl-alpha-D-glucosamine = UDP-N-acetyl-3-O-(1-carboxyvinyl)-alpha-D-glucosamine + phosphate. The protein operates within cell wall biogenesis; peptidoglycan biosynthesis. In terms of biological role, cell wall formation. Adds enolpyruvyl to UDP-N-acetylglucosamine. The sequence is that of UDP-N-acetylglucosamine 1-carboxyvinyltransferase from Pseudomonas syringae pv. tomato (strain ATCC BAA-871 / DC3000).